The chain runs to 1071 residues: DNA-directed RNA polymerase subunit beta (1071 aa).

It belongs to the RNA polymerase beta chain family. In plastids the minimal PEP RNA polymerase catalytic core is composed of four subunits: alpha, beta, beta', and beta''. When a (nuclear-encoded) sigma factor is associated with the core the holoenzyme is formed, which can initiate transcription.

The protein resides in the plastid. It is found in the chloroplast. The enzyme catalyses RNA(n) + a ribonucleoside 5'-triphosphate = RNA(n+1) + diphosphate. DNA-dependent RNA polymerase catalyzes the transcription of DNA into RNA using the four ribonucleoside triphosphates as substrates. This is DNA-directed RNA polymerase subunit beta from Acorus calamus (Sweet flag).